Here is a 128-residue protein sequence, read N- to C-terminus: uncharacterized protein (128 aa).

A run of 3 helical transmembrane segments spans residues 19–41 (MAIV…YVGS), 54–71 (LTFL…SIMQ), and 75–97 (PLIA…VDNL).

It localises to the cell membrane. This is an uncharacterized protein from Pasteurella multocida (strain Pm70).